We begin with the raw amino-acid sequence, 417 residues long: Diaminopimelate decarboxylase (417 aa).

The residue at position 61 (Lys61) is an N6-(pyridoxal phosphate)lysine. Residues Gly240 and 275–278 (EPGR) contribute to the pyridoxal 5'-phosphate site. Substrate contacts are provided by Arg278, Arg314, and Tyr318. Catalysis depends on Cys344, which acts as the Proton donor. Substrate contacts are provided by Glu345 and Tyr372. A pyridoxal 5'-phosphate-binding site is contributed by Tyr372.

Belongs to the Orn/Lys/Arg decarboxylase class-II family. LysA subfamily. Homodimer. The cofactor is pyridoxal 5'-phosphate.

It catalyses the reaction meso-2,6-diaminopimelate + H(+) = L-lysine + CO2. The protein operates within amino-acid biosynthesis; L-lysine biosynthesis via DAP pathway; L-lysine from DL-2,6-diaminopimelate: step 1/1. In terms of biological role, specifically catalyzes the decarboxylation of meso-diaminopimelate (meso-DAP) to L-lysine. This Vibrio cholerae serotype O1 (strain ATCC 39315 / El Tor Inaba N16961) protein is Diaminopimelate decarboxylase (lysA).